A 1279-amino-acid chain; its full sequence is Mediator of DNA damage checkpoint protein 1 (1279 aa).

A disordered region spans residues 1-22 (MENTQVIDWDAEEEEETEISSG). The tract at residues 1–150 (MENTQVIDWD…PRSLLTIEKT (150 aa)) is interaction with CHEK2. Residues 2-222 (ENTQVIDWDA…SSPFGLGSDT (221 aa)) are interaction with the MRN complex. Threonine 4 carries the post-translational modification Phosphothreonine. The span at 9–18 (WDAEEEEETE) shows a compositional bias: acidic residues. The region spanning 54-105 (NVVGRSPDCSVALPFPSISKQHAVIEISAWNKAPILQDCGSLNGTQIVKPPR) is the FHA domain. A Phosphothreonine modification is found at threonine 146. 3 disordered regions span residues 156–394 (RSQN…EEVS), 409–634 (LWSG…KHAK), and 714–744 (ETSE…PVPT). Residues serine 168 and serine 176 each carry the phosphoserine modification. Positions 179–192 (SVANGSRNTASPSA) are enriched in polar residues. 2 positions are modified to phosphoserine: serine 198 and serine 220. Threonine 222 is subject to Phosphothreonine. Over residues 264–277 (TKDKFKDTKMKEEA) the composition is skewed to basic and acidic residues. A compositionally biased stretch (low complexity) spans 278 to 292 (GSAGVPVGSVVEGSP). Serine 298 carries the post-translational modification Phosphoserine. Position 300 is a phosphothreonine (threonine 300). At serine 314 the chain carries Phosphoserine. Threonine 316 carries the phosphothreonine modification. Residues serine 350 and serine 354 each carry the phosphoserine modification. Threonine 356 carries the post-translational modification Phosphothreonine. A phosphoserine mark is found at serine 372 and serine 380. Residues 381–393 (DTDEEERGEEEEV) are compositionally biased toward acidic residues. At threonine 382 the chain carries Phosphothreonine. A phosphoserine mark is found at serine 394, serine 411, serine 421, serine 434, and serine 438. A compositionally biased stretch (polar residues) spans 421 to 435 (SQPQVLVERSQSASG). Threonine 440 bears the Phosphothreonine mark. Serine 457 is modified (phosphoserine). Threonine 466 is modified (phosphothreonine). Phosphoserine occurs at positions 488, 489, 550, 587, and 589. Positions 545 to 561 (QEGSSSPVADIRMSQQP) are enriched in polar residues. A compositionally biased stretch (basic and acidic residues) spans 620–634 (GREREAHVGGTKHAK). Serine 730 and serine 745 each carry phosphoserine. The residue at position 764 (lysine 764) is an N6-acetyllysine. A disordered region spans residues 772-1086 (QMMPDGKASG…TKPNQEAAAP (315 aa)). A phosphoserine mark is found at serine 793, serine 801, and serine 824. Residues 798–817 (ASASPQSLLTSQSQKQSTPQ) show a composition bias toward low complexity. Composition is skewed to polar residues over residues 862–889 (TCPT…STRT), 901–929 (QPST…TSVN), and 942–956 (PLTS…NLNP). At threonine 889 the chain carries Phosphothreonine. A Phosphothreonine modification is found at threonine 951. Lysine 991 participates in a covalent cross-link: Glycyl lysine isopeptide (Lys-Gly) (interchain with G-Cter in SUMO2). The segment covering 994–1014 (STPAEPEPQSSASQSSGASEA) has biased composition (low complexity). A phosphoserine mark is found at serine 1008, serine 1009, serine 1012, and serine 1016. Over residues 1032-1047 (VVKEEDPGEIQVKEEP) the composition is skewed to basic and acidic residues. Residue lysine 1034 forms a Glycyl lysine isopeptide (Lys-Gly) (interchain with G-Cter in SUMO1); alternate linkage. Residue lysine 1034 forms a Glycyl lysine isopeptide (Lys-Gly) (interchain with G-Cter in SUMO2); alternate linkage. At threonine 1054 the chain carries Phosphothreonine. BRCT domains are found at residues 1085 to 1163 (APKV…DYLV) and 1184 to 1275 (RERR…FVLS).

Homodimer. Interacts with H2AX, which requires phosphorylation of H2AX on 'Ser-139'. Interacts with the MRN complex, composed of MRE11, RAD50, and NBN. Interacts with CHEK2, which requires ATM-mediated phosphorylation of 'Thr-68' within the FHA domain of CHEK2. Interacts constitutively with the BRCA1-BARD1 complex, SMC1A and TP53BP1. Interacts with ATM and FANCD2, and these interactions are reduced upon DNA damage. Also interacts with the PRKDC complex, composed of XRCC6/KU70, XRCC5/KU80 and PRKDC/XRCC7. This interaction may be required for PRKDC autophosphorylation, which is essential for DNA double strand break (DSB) repair. When phosphorylated by ATM, interacts with RNF8 (via FHA domain). Interacts with CEP164. When phosphorylated, interacts with APTX (via FHA-like domain). Interacts (when phosphorylated) with TOPBP1; promoting TOPBP1 localization to DNA damage sites during mitosis. Interacts (when phosphorylated) with NBN; promoting NBN and MRN complex localization to DNA damage sites. Phosphorylated upon exposure to ionizing radiation (IR), ultraviolet radiation (UV), and hydroxyurea (HU). Phosphorylation in response to IR requires ATM, NBN, and possibly CHEK2. Also phosphorylated during the G2/M phase of the cell cycle and during activation of the mitotic spindle checkpoint. Phosphorylation at Thr-4 by ATM stabilizes and enhances homodimerization via the FHA domain. Phosphorylated at Ser-168 and Ser-198 by CK2 in response to DNA damage during mitosis, promoting interaction with TOPBP1. Phosphorylated by CK2 in response to DNA damage, promoting interaction with NBN and recruitment of the MRN complex to DNA damage sites. In terms of processing, sumoylation at Lys-1034 by PIAS4 following DNA damage promotes ubiquitin-mediated degradation. Post-translationally, ubiquitinated by RNF4, leading to proteasomal degradation; undergoes 'Lys-48'-linked polyubiquitination.

The protein resides in the nucleus. Its subcellular location is the chromosome. Its function is as follows. Histone reader protein required for checkpoint-mediated cell cycle arrest in response to DNA damage within both the S phase and G2/M phases of the cell cycle. Specifically recognizes and binds histone H2AX phosphorylated at 'Ser-139', a marker of DNA damage, serving as a scaffold for the recruitment of DNA repair and signal transduction proteins to discrete foci of DNA damage sites. Also required for downstream events subsequent to the recruitment of these proteins. These include phosphorylation and activation of the ATM, CHEK1 and CHEK2 kinases, and stabilization of TP53/p53 and apoptosis. ATM and CHEK2 may also be activated independently by a parallel pathway mediated by TP53BP1. Required for chromosomal stability during mitosis by promoting recruitment of TOPBP1 to DNA double strand breaks (DSBs): TOPBP1 forms filamentous assemblies that bridge MDC1 and tether broken chromosomes during mitosis. Required for the repair of DSBs via homologous recombination by promoting recruitment of NBN component of the MRN complex to DSBs. The polypeptide is Mediator of DNA damage checkpoint protein 1 (Mdc1) (Rattus norvegicus (Rat)).